The primary structure comprises 232 residues: Phosphatidylserine decarboxylase proenzyme (232 aa).

Ser201 functions as the Schiff-base intermediate with substrate; via pyruvic acid in the catalytic mechanism. At Ser201 the chain carries Pyruvic acid (Ser); by autocatalysis.

The protein belongs to the phosphatidylserine decarboxylase family. PSD-A subfamily. As to quaternary structure, heterodimer of a large membrane-associated beta subunit and a small pyruvoyl-containing alpha subunit. Pyruvate serves as cofactor. Is synthesized initially as an inactive proenzyme. Formation of the active enzyme involves a self-maturation process in which the active site pyruvoyl group is generated from an internal serine residue via an autocatalytic post-translational modification. Two non-identical subunits are generated from the proenzyme in this reaction, and the pyruvate is formed at the N-terminus of the alpha chain, which is derived from the carboxyl end of the proenzyme. The post-translation cleavage follows an unusual pathway, termed non-hydrolytic serinolysis, in which the side chain hydroxyl group of the serine supplies its oxygen atom to form the C-terminus of the beta chain, while the remainder of the serine residue undergoes an oxidative deamination to produce ammonia and the pyruvoyl prosthetic group on the alpha chain.

Its subcellular location is the cell membrane. It catalyses the reaction a 1,2-diacyl-sn-glycero-3-phospho-L-serine + H(+) = a 1,2-diacyl-sn-glycero-3-phosphoethanolamine + CO2. The protein operates within phospholipid metabolism; phosphatidylethanolamine biosynthesis; phosphatidylethanolamine from CDP-diacylglycerol: step 2/2. Its function is as follows. Catalyzes the formation of phosphatidylethanolamine (PtdEtn) from phosphatidylserine (PtdSer). The chain is Phosphatidylserine decarboxylase proenzyme from Mycolicibacterium gilvum (strain PYR-GCK) (Mycobacterium gilvum (strain PYR-GCK)).